Consider the following 266-residue polypeptide: Killer cell lectin-like receptor 6 (266 aa).

At 1–44 (MSEPEVTYSTVRLHKSSRLQKLVRHEETQGPREAGYRKCSVCWQ) the chain is on the cytoplasmic side. The helical; Signal-anchor for type II membrane protein transmembrane segment at 45-66 (LIVKALGILCFLLLITVAVLAV) threads the bilayer. Residues 67–266 (KIFQYGQHNQ…CGKKLDKFPH (200 aa)) are Extracellular-facing. N87 and N104 each carry an N-linked (GlcNAc...) asparagine glycan. One can recognise a C-type lectin domain in the interval 143–261 (GVKYWFCYRT…SHYCICGKKL (119 aa)). 4 disulfide bridges follow: C149-C154, C167-C255, C171-C257, and C236-C249.

In terms of assembly, homodimer; disulfide-linked.

It localises to the membrane. Its function is as follows. Receptor on natural killer (NK) cells for class I MHC. This chain is Killer cell lectin-like receptor 6 (Klra6), found in Mus musculus (Mouse).